Here is a 364-residue protein sequence, read N- to C-terminus: Chorismate synthase (364 aa).

Position 48 (arginine 48) interacts with NADP(+). Residues 131 to 133 (RAS), 243 to 244 (NA), glycine 288, 303 to 307 (KPTSS), and arginine 329 each bind FMN.

Belongs to the chorismate synthase family. In terms of assembly, homotetramer. The cofactor is FMNH2.

It carries out the reaction 5-O-(1-carboxyvinyl)-3-phosphoshikimate = chorismate + phosphate. The protein operates within metabolic intermediate biosynthesis; chorismate biosynthesis; chorismate from D-erythrose 4-phosphate and phosphoenolpyruvate: step 7/7. Functionally, catalyzes the anti-1,4-elimination of the C-3 phosphate and the C-6 proR hydrogen from 5-enolpyruvylshikimate-3-phosphate (EPSP) to yield chorismate, which is the branch point compound that serves as the starting substrate for the three terminal pathways of aromatic amino acid biosynthesis. This reaction introduces a second double bond into the aromatic ring system. In Bartonella bacilliformis (strain ATCC 35685 / KC583 / Herrer 020/F12,63), this protein is Chorismate synthase.